A 206-amino-acid polypeptide reads, in one-letter code: MELKLLNENGQEGAVVNASDVVFGRDYNEALIHQVVVAYQANARQGNRAQKDREQVKHTTKKPWRQKGTGRARAGMSSSPLWRGGGRIFPNSPEENFSHKVNKKMHRAGLCSIFSQLAREGRLSVVEDIILEAPKTKLLADKFKTMGLDSVLIITDTVDENLYLASRNLPHVAIVEPRYADPLSLIYFKKVLVTKAAVAQIEELLS.

Positions Gln-45–Ser-78 are disordered. Residues His-58–Gly-70 are compositionally biased toward basic residues.

The protein belongs to the universal ribosomal protein uL4 family. Part of the 50S ribosomal subunit.

Functionally, one of the primary rRNA binding proteins, this protein initially binds near the 5'-end of the 23S rRNA. It is important during the early stages of 50S assembly. It makes multiple contacts with different domains of the 23S rRNA in the assembled 50S subunit and ribosome. Forms part of the polypeptide exit tunnel. The chain is Large ribosomal subunit protein uL4 from Burkholderia ambifaria (strain MC40-6).